A 205-amino-acid chain; its full sequence is Thymidylate kinase (205 aa).

10 to 17 (GTEGVGKS) serves as a coordination point for ATP.

The protein belongs to the thymidylate kinase family.

It carries out the reaction dTMP + ATP = dTDP + ADP. In terms of biological role, phosphorylation of dTMP to form dTDP in both de novo and salvage pathways of dTTP synthesis. This Teredinibacter turnerae (strain ATCC 39867 / T7901) protein is Thymidylate kinase.